The sequence spans 376 residues: MTFLYITCYCVAFNRKLLVFMQMEKGKHNKGGYSSISGPQVIEKSFNDMSISCTGFGSGSGLGGLNTDTDTFTSRPKGRTSGGTTGAGKGIGMKLGNTKKTNQFLESLKAEGEVIMEDFQPCSLQSRSSPLPPSDPVTVAVEEKLNVAVKRDGGVNNFDVQGTLALLVLNDADGLILLQIESQDIPGLSFKTHPNINKDLFNSQQILGAKDPIRPFPSGQNETPLVKWRIQGMNESSLPLSVNCWPSILGNETYVNIEYEASEMFDLHSVIISIPLPALREAPRVRQIDGEWKYDSRNSVLEWSIILIDQSNRSGSMEFVVPPADPSMFYPISVGFSASNTFSNVKVTGIRPLNEGSNPPKYSQRVRLVADNYQVV.

A disordered region spans residues 65–92 (LNTDTDTFTSRPKGRTSGGTTGAGKGIG). Residues 80–92 (TSGGTTGAGKGIG) are compositionally biased toward gly residues. The region spanning 134–376 (SDPVTVAVEE…RLVADNYQVV (243 aa)) is the MHD domain.

This sequence belongs to the adaptor complexes medium subunit family. Delta-COP subfamily. As to quaternary structure, oligomeric complex that consists of at least the alpha, beta, beta', gamma, delta, epsilon and zeta subunits.

Its subcellular location is the cytoplasm. It localises to the golgi apparatus membrane. The protein localises to the cytoplasmic vesicle. It is found in the COPI-coated vesicle membrane. Its function is as follows. The coatomer is a cytosolic protein complex that binds to dilysine motifs and reversibly associates with Golgi non-clathrin-coated vesicles, which further mediate biosynthetic protein transport from the ER, via the Golgi up to the trans Golgi network. Coatomer complex is required for budding from Golgi membranes, and is essential for the retrograde Golgi-to-ER transport of dilysine-tagged proteins. The polypeptide is Coatomer subunit delta-4 (Oryza sativa subsp. japonica (Rice)).